Reading from the N-terminus, the 482-residue chain is tRNA sulfurtransferase (482 aa).

Positions 61 to 165 (VQICDALTRI…QDVLILVKAR (105 aa)) constitute a THUMP domain. Residues 183–184 (LI), Lys265, Gly287, and Gln296 each bind ATP. A disulfide bond links Cys344 and Cys456. The region spanning 404-482 (FAPTDVLLDI…GFDNVKVYRP (79 aa)) is the Rhodanese domain. Cys456 (cysteine persulfide intermediate) is an active-site residue.

This sequence belongs to the ThiI family.

Its subcellular location is the cytoplasm. It catalyses the reaction [ThiI sulfur-carrier protein]-S-sulfanyl-L-cysteine + a uridine in tRNA + 2 reduced [2Fe-2S]-[ferredoxin] + ATP + H(+) = [ThiI sulfur-carrier protein]-L-cysteine + a 4-thiouridine in tRNA + 2 oxidized [2Fe-2S]-[ferredoxin] + AMP + diphosphate. It carries out the reaction [ThiS sulfur-carrier protein]-C-terminal Gly-Gly-AMP + S-sulfanyl-L-cysteinyl-[cysteine desulfurase] + AH2 = [ThiS sulfur-carrier protein]-C-terminal-Gly-aminoethanethioate + L-cysteinyl-[cysteine desulfurase] + A + AMP + 2 H(+). It participates in cofactor biosynthesis; thiamine diphosphate biosynthesis. Its function is as follows. Catalyzes the ATP-dependent transfer of a sulfur to tRNA to produce 4-thiouridine in position 8 of tRNAs, which functions as a near-UV photosensor. Also catalyzes the transfer of sulfur to the sulfur carrier protein ThiS, forming ThiS-thiocarboxylate. This is a step in the synthesis of thiazole, in the thiamine biosynthesis pathway. The sulfur is donated as persulfide by IscS. The protein is tRNA sulfurtransferase of Photorhabdus laumondii subsp. laumondii (strain DSM 15139 / CIP 105565 / TT01) (Photorhabdus luminescens subsp. laumondii).